The following is a 170-amino-acid chain: Ribosome maturation factor RimM (170 aa).

One can recognise a PRC barrel domain in the interval 92–163; the sequence is KEGWYYFELE…RMDVELPPGL (72 aa).

The protein belongs to the RimM family. In terms of assembly, binds ribosomal protein uS19.

It localises to the cytoplasm. An accessory protein needed during the final step in the assembly of 30S ribosomal subunit, possibly for assembly of the head region. Essential for efficient processing of 16S rRNA. May be needed both before and after RbfA during the maturation of 16S rRNA. It has affinity for free ribosomal 30S subunits but not for 70S ribosomes. The protein is Ribosome maturation factor RimM of Desulfitobacterium hafniense (strain Y51).